The primary structure comprises 388 residues: Dual-specificity RNA methyltransferase RlmN (388 aa).

Residue Glu-109 is the Proton acceptor of the active site. In terms of domain architecture, Radical SAM core spans Glu-115 to Asp-354. Cys-122 and Cys-359 are joined by a disulfide. Positions 129, 133, and 136 each coordinate [4Fe-4S] cluster. S-adenosyl-L-methionine-binding positions include Gly-183–Glu-184, Ser-215, Ser-237–His-239, and Asn-316. Cys-359 (S-methylcysteine intermediate) is an active-site residue.

This sequence belongs to the radical SAM superfamily. RlmN family. It depends on [4Fe-4S] cluster as a cofactor.

It is found in the cytoplasm. It carries out the reaction adenosine(2503) in 23S rRNA + 2 reduced [2Fe-2S]-[ferredoxin] + 2 S-adenosyl-L-methionine = 2-methyladenosine(2503) in 23S rRNA + 5'-deoxyadenosine + L-methionine + 2 oxidized [2Fe-2S]-[ferredoxin] + S-adenosyl-L-homocysteine. The catalysed reaction is adenosine(37) in tRNA + 2 reduced [2Fe-2S]-[ferredoxin] + 2 S-adenosyl-L-methionine = 2-methyladenosine(37) in tRNA + 5'-deoxyadenosine + L-methionine + 2 oxidized [2Fe-2S]-[ferredoxin] + S-adenosyl-L-homocysteine. Functionally, specifically methylates position 2 of adenine 2503 in 23S rRNA and position 2 of adenine 37 in tRNAs. m2A2503 modification seems to play a crucial role in the proofreading step occurring at the peptidyl transferase center and thus would serve to optimize ribosomal fidelity. The protein is Dual-specificity RNA methyltransferase RlmN of Klebsiella pneumoniae subsp. pneumoniae (strain ATCC 700721 / MGH 78578).